A 315-amino-acid chain; its full sequence is CID domain-containing protein 1 (315 aa).

Residues 1-135 (MADFTEQTLR…RLHEVHQQVK (135 aa)) form the CID domain. A coiled-coil region spans residues 227-273 (MLEEYVKRLKNETNERETLESNLNMLIENVRMSIEHHEKLCREVKRR).

The chain is CID domain-containing protein 1 (cids-1) from Caenorhabditis elegans.